The following is a 63-amino-acid chain: Anionic peptide NDBP7 (63 aa).

A signal peptide spans 1–20 (MISRFCLLFLLVFVVSKIQA).

This sequence belongs to the non-disulfide-bridged peptide (NDBP) superfamily. Long chain multifunctional peptide (group 2) family. In terms of tissue distribution, expressed by the venom gland.

It is found in the secreted. The sequence is that of Anionic peptide NDBP7 from Lychas mucronatus (Chinese swimming scorpion).